We begin with the raw amino-acid sequence, 270 residues long: Electron transfer flavoprotein subunit beta (270 aa).

Belongs to the ETF alpha-subunit/FixB family. In terms of assembly, heterodimer of an alpha and a beta subunit. Requires FAD as cofactor.

Its function is as follows. The electron transfer flavoprotein serves as a specific electron acceptor for other dehydrogenases. It transfers the electrons to the main respiratory chain via ETF-ubiquinone oxidoreductase (ETF dehydrogenase). This chain is Electron transfer flavoprotein subunit beta (etfB), found in Megasphaera elsdenii.